Here is a 244-residue protein sequence, read N- to C-terminus: Proteasome subunit alpha type-5 (244 aa).

It belongs to the peptidase T1A family. The 26S proteasome consists of a 20S proteasome core and two 19S regulatory subunits. The 20S proteasome core is composed of 28 subunits that are arranged in four stacked rings, resulting in a barrel-shaped structure. The two end rings are each formed by seven alpha subunits, and the two central rings are each formed by seven beta subunits. The catalytic chamber with the active sites is on the inside of the barrel.

The protein resides in the cytoplasm. It localises to the nucleus. In terms of biological role, the proteasome is a multicatalytic proteinase complex which is characterized by its ability to cleave peptides with Arg, Phe, Tyr, Leu, and Glu adjacent to the leaving group at neutral or slightly basic pH. The proteasome has an ATP-dependent proteolytic activity. The chain is Proteasome subunit alpha type-5 (Prosalpha5) from Drosophila melanogaster (Fruit fly).